The chain runs to 125 residues: Fatty acid-binding protein, liver-type (125 aa).

The protein belongs to the calycin superfamily. Fatty-acid binding protein (FABP) family.

It is found in the cytoplasm. The sequence is that of Fatty acid-binding protein, liver-type (fabp1) from Takifugu rubripes (Japanese pufferfish).